We begin with the raw amino-acid sequence, 545 residues long: Glutamine-dependent NAD(+) synthetase (545 aa).

The 243-residue stretch at 5–247 folds into the CN hydrolase domain; it reads LRIAMAQFDF…DQWLVVDYMR (243 aa). Catalysis depends on E46, which acts as the Proton acceptor; for glutaminase activity. K113 acts as the For glutaminase activity in catalysis. An L-glutamine-binding site is contributed by Y119. The active-site Nucleophile; for glutaminase activity is the C151. L-glutamine-binding residues include S177 and K183. A ligase region spans residues 269–545; that stretch reads VWRAVVRGVQ…RYPISNAYRG (277 aa). 292 to 299 contacts ATP; it reads GLSGGIDS. N375 is a deamido-NAD(+) binding site. T399 lines the ATP pocket. 2 residues coordinate deamido-NAD(+): E404 and K516.

In the C-terminal section; belongs to the NAD synthetase family.

It carries out the reaction deamido-NAD(+) + L-glutamine + ATP + H2O = L-glutamate + AMP + diphosphate + NAD(+) + H(+). Its pathway is cofactor biosynthesis; NAD(+) biosynthesis; NAD(+) from deamido-NAD(+) (L-Gln route): step 1/1. In terms of biological role, catalyzes the ATP-dependent amidation of deamido-NAD to form NAD. Uses L-glutamine as a nitrogen source. This is Glutamine-dependent NAD(+) synthetase from Xylella fastidiosa (strain 9a5c).